We begin with the raw amino-acid sequence, 95 residues long: Small ubiquitin-related modifier 2-A (95 aa).

Residue K11 forms a Glycyl lysine isopeptide (Lys-Gly) (interchain with G-Cter in SUMO) linkage. The region spanning 16–95 is the Ubiquitin-like domain; sequence DHINLKVAGQ…VFQQQTGGSF (80 aa). G93 is covalently cross-linked (Glycyl lysine isopeptide (Gly-Lys) (interchain with K-? in acceptor proteins)). The propeptide occupies 94-95; sequence SF.

The protein belongs to the ubiquitin family. SUMO subfamily. Interacts with sae2 and ube2i. Covalently attached to a number of proteins, including top2. Polymeric chains can be formed through Lys-11 cross-linking. In terms of processing, cleavage of precursor form by a sentrin-specific protease is necessary for function.

The protein resides in the nucleus. In terms of biological role, ubiquitin-like protein that can be covalently attached to proteins as a monomer or as a lysine-linked polymer. Covalent attachment via an isopeptide bond to its substrates requires prior activation by the E1 complex sae1-sae2 and linkage to the E2 enzyme ube2i, and can be promoted by an E3 ligase such as pias1-4. This post-translational modification on lysine residues of proteins plays a crucial role in a number of cellular processes such as nuclear transport, DNA replication and repair, mitosis and signal transduction. Polymeric sumo2 chains are also susceptible to polyubiquitination which functions as a signal for proteasomal degradation of modified proteins. The chain is Small ubiquitin-related modifier 2-A (sumo2-a) from Xenopus laevis (African clawed frog).